We begin with the raw amino-acid sequence, 390 residues long: uncharacterized protein (390 aa).

Belongs to the glycosyltransferase group 1 family. Glycosyltransferase 4 subfamily.

This is an uncharacterized protein from Methanocaldococcus jannaschii (strain ATCC 43067 / DSM 2661 / JAL-1 / JCM 10045 / NBRC 100440) (Methanococcus jannaschii).